The following is a 437-amino-acid chain: 23S rRNA (uracil(1939)-C(5))-methyltransferase RlmD (437 aa).

In terms of domain architecture, TRAM spans 10–68; the sequence is SAPRNTTFVAEILDLDYQGRGVAKVQGKTWFIENALPQEKVEVRIVDEKRHYGHGISCK. 4 residues coordinate [4Fe-4S] cluster: Cys81, Cys87, Cys90, and Cys167. Gln270, Phe299, Asn304, Glu320, Asn347, and Asp368 together coordinate S-adenosyl-L-methionine. Cys394 acts as the Nucleophile in catalysis.

The protein belongs to the class I-like SAM-binding methyltransferase superfamily. RNA M5U methyltransferase family. RlmD subfamily.

The enzyme catalyses uridine(1939) in 23S rRNA + S-adenosyl-L-methionine = 5-methyluridine(1939) in 23S rRNA + S-adenosyl-L-homocysteine + H(+). Its function is as follows. Catalyzes the formation of 5-methyl-uridine at position 1939 (m5U1939) in 23S rRNA. This chain is 23S rRNA (uracil(1939)-C(5))-methyltransferase RlmD, found in Pasteurella multocida (strain Pm70).